The following is a 227-amino-acid chain: Phosphoglycolate phosphatase (227 aa).

Asp-11 (nucleophile) is an active-site residue. 2 residues coordinate Mg(2+): Asp-11 and Asp-13. Lys-155 lines the substrate pocket. Residues Asp-178 and Asp-182 each coordinate Mg(2+).

This sequence belongs to the archaeal SPP-like hydrolase family. Mg(2+) serves as cofactor.

It carries out the reaction 2-phosphoglycolate + H2O = glycolate + phosphate. Catalyzes the dephosphorylation of 2-phosphoglycolate. The chain is Phosphoglycolate phosphatase from Haloarcula marismortui (strain ATCC 43049 / DSM 3752 / JCM 8966 / VKM B-1809) (Halobacterium marismortui).